The primary structure comprises 205 residues: Small ribosomal subunit protein uS4 (205 aa).

Positions 20–44 are disordered; that stretch reads WGRPKSPVNRREYGPGQHGQRRKGK. In terms of domain architecture, S4 RNA-binding spans 94–154; sequence SRLDAIVYRS…ERSKQLLLVL (61 aa).

It belongs to the universal ribosomal protein uS4 family. In terms of assembly, part of the 30S ribosomal subunit. Contacts protein S5. The interaction surface between S4 and S5 is involved in control of translational fidelity.

Its function is as follows. One of the primary rRNA binding proteins, it binds directly to 16S rRNA where it nucleates assembly of the body of the 30S subunit. Functionally, with S5 and S12 plays an important role in translational accuracy. The polypeptide is Small ribosomal subunit protein uS4 (Bartonella bacilliformis (strain ATCC 35685 / KC583 / Herrer 020/F12,63)).